The chain runs to 25 residues: GWASKIGQTLGKMAKVGLHELIQPK.

In terms of tissue distribution, expressed by the skin glands.

The protein localises to the secreted. Functionally, antimicrobial peptide. In Xenopus boumbaensis (Mawa clawed frog), this protein is Xenoposin precursor fragment BM1.